The primary structure comprises 236 residues: MKVFPAVDILGGRCVQLVQGRRESATDFGDPLSCATQWLEEGATALHVINLDGAFGKAQANAALIRDLVDVTGVEVQLGGGIRSIADATAWLETGVDRIIIGTLATEHPEVLGTLASEYGGARIMAGVDARDGQIAVEGWQQTRGNFCTWATRFEEQGAGSLLYTNVDIEGLQQGVRLDPVKELIRMVSIPVVVAGGVSSPADLQGLHQAGVAGAVLGSALYSGKITLEEALKAIQ.

Residue aspartate 8 is the Proton acceptor of the active site. Catalysis depends on aspartate 129, which acts as the Proton donor.

The protein belongs to the HisA/HisF family.

Its subcellular location is the cytoplasm. The catalysed reaction is 1-(5-phospho-beta-D-ribosyl)-5-[(5-phospho-beta-D-ribosylamino)methylideneamino]imidazole-4-carboxamide = 5-[(5-phospho-1-deoxy-D-ribulos-1-ylimino)methylamino]-1-(5-phospho-beta-D-ribosyl)imidazole-4-carboxamide. The protein operates within amino-acid biosynthesis; L-histidine biosynthesis; L-histidine from 5-phospho-alpha-D-ribose 1-diphosphate: step 4/9. The polypeptide is 1-(5-phosphoribosyl)-5-[(5-phosphoribosylamino)methylideneamino] imidazole-4-carboxamide isomerase (Methanosphaerula palustris (strain ATCC BAA-1556 / DSM 19958 / E1-9c)).